Reading from the N-terminus, the 467-residue chain is MNPEALKGVAVSVIGAGKSGVAAAGLLASAGARPLVSEFGTVKAEAAEQMRALGVPFEEGGHSERVFEAELCVVSPGIPRTAPVIREMEARGISVVSEIELASWFCRARIIGITGTDGKTTTATLIHRICEADGEQQGYRAFSVGNIGTPFSSEVSGMEPDDIAVLELSSYQLEGCSSFRPNIAVLTNITPDHMDRYGGDIHAYARAKFRIHASQQAGDTLIYNHDDPLLRAHFEGDGPWPFKVVRTGLKAESFEGVSEDFVSVADGWIVIRTAGLTEQFMPVDEVMKPGFRGEHNLYNVLSSVAAARAAGVRDDAVRRSLSEFGGVEHRQEFVGSFCGVDWINDSKATNVNAMRQALQTVPAGMVLIAGGRDKGNDYASIAELVKEKVSCIVAIGESRGKIAEAFRGVVPVFEAASLHEAVELARQSARPGGSVLFSPACSSFDMFSDFEDRGRQFKQSVREMASC.

115-121 (GTDGKTT) contacts ATP.

This sequence belongs to the MurCDEF family.

It is found in the cytoplasm. It carries out the reaction UDP-N-acetyl-alpha-D-muramoyl-L-alanine + D-glutamate + ATP = UDP-N-acetyl-alpha-D-muramoyl-L-alanyl-D-glutamate + ADP + phosphate + H(+). The protein operates within cell wall biogenesis; peptidoglycan biosynthesis. Functionally, cell wall formation. Catalyzes the addition of glutamate to the nucleotide precursor UDP-N-acetylmuramoyl-L-alanine (UMA). The chain is UDP-N-acetylmuramoylalanine--D-glutamate ligase from Chlorobaculum parvum (strain DSM 263 / NCIMB 8327) (Chlorobium vibrioforme subsp. thiosulfatophilum).